A 656-amino-acid chain; its full sequence is MHTPLIDLRGIRKSYGGGDSPRVNVLRGIDLSIHAGEFVAIVGASGSGKSTLMNILGCLDRPTSGEYLFAGENVAELGGDELAWLRREAFGFVFQGYHLIPSGSAQENVEMPAIYAGTPAAERHARAAALLDRLGLASRTGNRPHQLSGGQQQRVSIARALMNGGHIILADEPTGALDSHSGAEVMTLLDELASQGHVVILITHDREVAARANRVIEISDGLVISDTARDLSTPRSANPAALQAVDLRKRLSEGSGSHGAWKGELLDAIQAAWRVMWVNRFRTALTLLGIVIGVASVVVMLAVGEGSKRQVMAQMSSFGSNIIYLNGKAPNPRAPKGVITLEEVAALGELPEVKMIMPVNGGQAGVRFGNVDHSSYVGGNDTHFPAIFNWPVAEGSYFSEADEQGAAAVAVIGYKVRQKLFGDRIDPIGQYILIENVPFQVVGVLQEKGATSGDLDSDNRIAIPYSSASIRLFGSQDPEYITIATRDANNVKQAEAAIRTLLQRLHNGKQDYELTNNAAMIQAEARTQNTLSLMLGSIAAISLLVGGIGVMNIMLMTVRERTREIGIRMATGARQRDILRQFLTEAVMLSVVGGLAGIVLALAMGAALLASKVAVAFTLSAVIGAFACALVTGVIFGFMPARKAARLDPVAALTSE.

The 240-residue stretch at 6 to 245 (IDLRGIRKSY…SANPAALQAV (240 aa)) folds into the ABC transporter domain. Residue 43-50 (GASGSGKS) participates in ATP binding. A run of 4 helical transmembrane segments spans residues 284-304 (ALTL…LAVG), 538-558 (IAAI…LMTV), 589-609 (LSVV…AALL), and 619-639 (LSAV…FGFM).

Belongs to the ABC transporter superfamily. Macrolide exporter (TC 3.A.1.122) family. In terms of assembly, part of the tripartite efflux system PvdRT-OpmQ, which is composed of an inner membrane component with both ATPase and permease domains, PvdT, a periplasmic membrane fusion protein, PvdR, and an outer membrane component, OpmQ.

It localises to the cell inner membrane. Functionally, part of the tripartite efflux system PvdRT-OpmQ required for the secretion into the extracellular milieu of the siderophore pyoverdine (PVD), which is involved in iron acquisition. This subunit binds PVD and drives its secretion by hydrolyzing ATP. The system is responsible for export of newly synthesized PVD after the final steps of biosynthesis have taken place in the periplasm. It is also responsible for recycling of PVD after internalization of ferri-PVD into the periplasm by the outer-membrane receptor FpvA and release of iron from PVD, thus making PVD available for new cycles of iron uptake. The polypeptide is Pyoverdine export ATP-binding/permease protein PvdT (Pseudomonas syringae pv. tomato (strain ATCC BAA-871 / DC3000)).